Consider the following 183-residue polypeptide: Guanylate kinase (183 aa).

Residues 4–182 (GRVVVLTGPS…AITALEAAIF (179 aa)) form the Guanylate kinase-like domain. 11–18 (GPSGVGKG) contributes to the ATP binding site.

Belongs to the guanylate kinase family.

Its subcellular location is the cytoplasm. The enzyme catalyses GMP + ATP = GDP + ADP. It carries out the reaction dZMP + ATP = dZDP + ADP. It functions in the pathway purine metabolism. Essential for recycling GMP and indirectly, cGMP. Its function is as follows. (Microbial infection) Catalyzes the phosphorylation of dZMP to dZDP, when the bacterium is infected by a phage that produces the substrate for the synthesis of dZTP (2- amino-2'-deoxyadenosine 5'-triphosphate), which is then used by the phage as a DNA polymerase substrate. The protein is Guanylate kinase of Synechococcus elongatus (strain ATCC 33912 / PCC 7942 / FACHB-805) (Anacystis nidulans R2).